The chain runs to 32 residues: Photosystem II reaction center protein T (32 aa).

A helical membrane pass occupies residues 3 to 23 (ALVYTFLLVATLGIIFFAIFF).

Belongs to the PsbT family. As to quaternary structure, PSII is composed of 1 copy each of membrane proteins PsbA, PsbB, PsbC, PsbD, PsbE, PsbF, PsbH, PsbI, PsbJ, PsbK, PsbL, PsbM, PsbT, PsbY, PsbZ, Psb30/Ycf12, at least 3 peripheral proteins of the oxygen-evolving complex and a large number of cofactors. It forms dimeric complexes.

Its subcellular location is the plastid. The protein resides in the chloroplast thylakoid membrane. In terms of biological role, found at the monomer-monomer interface of the photosystem II (PS II) dimer, plays a role in assembly and dimerization of PSII. PSII is a light-driven water plastoquinone oxidoreductase, using light energy to abstract electrons from H(2)O, generating a proton gradient subsequently used for ATP formation. The polypeptide is Photosystem II reaction center protein T (Psilotum nudum (Whisk fern)).